The following is an 852-amino-acid chain: DNA mismatch repair protein MutS (852 aa).

Residue 615–622 (GPNMAGKS) coordinates ATP.

Belongs to the DNA mismatch repair MutS family.

Its function is as follows. This protein is involved in the repair of mismatches in DNA. It is possible that it carries out the mismatch recognition step. This protein has a weak ATPase activity. This chain is DNA mismatch repair protein MutS, found in Thermodesulfovibrio yellowstonii (strain ATCC 51303 / DSM 11347 / YP87).